The following is a 67-amino-acid chain: Large ribosomal subunit protein uL29 (67 aa).

It belongs to the universal ribosomal protein uL29 family.

The sequence is that of Large ribosomal subunit protein uL29 from Desulfitobacterium hafniense (strain DSM 10664 / DCB-2).